The following is a 91-amino-acid chain: Small ribosomal subunit protein bS20 (91 aa).

A disordered region spans residues 1-23 (MANTPSAKKRAKQAEKRRSHNAS). Basic residues predominate over residues 7–20 (AKKRAKQAEKRRSH).

It belongs to the bacterial ribosomal protein bS20 family.

Its function is as follows. Binds directly to 16S ribosomal RNA. This chain is Small ribosomal subunit protein bS20, found in Pseudomonas aeruginosa (strain LESB58).